The following is a 1708-amino-acid chain: Rapamycin-insensitive companion of mTOR (1708 aa).

Positions 1–789 are interaction with NBN; it reads MAAIGRGRSL…DKANLHALIQ (789 aa). A phosphoserine mark is found at S21, S35, and S265. A Glycyl lysine isopeptide (Lys-Gly) (interchain with G-Cter in ubiquitin) cross-link involves residue K274. The segment at 521-570 is ribosome-binding domain; sequence LKDTEEALLINLRDSQVLQHKENLEWNWNLIGTILKWPNVNLRNYKDEQL. ATP is bound by residues N543, R572, and R576. Residues 1022–1041 form a disordered region; it reads LSLNSESTSSRHNSESESVP. An N6-acetyllysine mark is found at K1092 and K1095. Position 1103 is a phosphothreonine (T1103). Residues 1103-1134 are disordered; sequence TLPNKKHRSSSDPKGGKLSSESKTSNRRIRTL. N6-acetyllysine occurs at positions 1116, 1119, and 1125. Residue T1135 is modified to Phosphothreonine; by RPS6KB1. S1138, S1162, and S1219 each carry phosphoserine. The interval 1204–1252 is disordered; it reads VVESSTSSHMKIRSQSFNTDTTTSGISSMSSSPSRETVGVDATTMDTDC. Over residues 1206-1221 the composition is skewed to polar residues; that stretch reads ESSTSSHMKIRSQSFN. Residues 1222–1240 are compositionally biased toward low complexity; that stretch reads TDTTTSGISSMSSSPSRET. A Phosphoserine; by GSK3-beta modification is found at S1235. Residue T1271 is modified to Phosphothreonine. 4 positions are modified to phosphoserine: S1274, S1278, S1282, and S1284. Residues 1275 to 1288 show a composition bias toward low complexity; sequence NHLSLSKSNSVSLV. A disordered region spans residues 1275–1298; sequence NHLSLSKSNSVSLVPPGSSHTLPR. At T1295 the chain carries Phosphothreonine. Residues S1302 and S1313 each carry the phosphoserine modification. Position 1332 is a phosphothreonine (T1332). Phosphoserine is present on residues S1346 and S1353. Phosphothreonine is present on T1376. A Phosphoserine modification is found at S1385. The residue at position 1386 (Y1386) is a Phosphotyrosine. 3 positions are modified to phosphoserine: S1388, S1396, and S1411. Zn(2+) is bound by residues H1515, C1520, and C1523. 4 positions are modified to phosphoserine: S1571, S1574, S1577, and S1591. C1651 contacts Zn(2+). At T1695 the chain carries Phosphothreonine; by GSK3-alpha and GSK3-beta.

Belongs to the RICTOR family. In terms of assembly, component of the mechanistic target of rapamycin complex 2 (mTORC2), consisting in two heterotretramers composed of MTOR, MLST8, RICTOR and MAPKAP1/SIN1. The mTORC2 core complex associates with PRR5/PROTOR1 and/or PRR5L/PROTOR2. Contrary to mTORC1, mTORC2 does not bind to and is not sensitive to FKBP12-rapamycin. Binds directly to MTOR and PRR5 within the TORC2 complex; interaction with MTOR is enhanced by deubiquitination of RICTOR by USP9X. Interaction with MAPKAP1 is not enhanced by RICTOR deubiquitination by USP9X. Interacts with CCDC28B. Interacts with NBN. Interacts with SIK3. Interacts with NCKAP1L. Interacts with kinases GSK3A and GSK3B; the interactions lead to phosphorylation of RICTOR at Thr-1695 which facilitates its FBXW7-mediated ubiquitination and subsequent degradation. Interacts with FBXW7; the interaction is enhanced by GSK3-mediated phosphorylation of Thr-1695 and results in RICTOR ubiquitination and degradation. Interacts with ARMH4 (via cytoplasmic tail); this interaction bridges ARMH4 to the mTORC2 complex and inhibits the mTORC2 kinase activity. Interacts with UBXN2A. Interacts with TSPAN8. As to quaternary structure, (Microbial infection) Interacts with vaccinia virus protein F17; this interaction dysregulates MTOR. Phosphorylated by MTOR; when part of mTORC2. Phosphorylated at Thr-1135 by RPS6KB1 downstream of the mTORC1 complex: phosphorylation of RICTOR inhibits mTORC2 signaling by creating a binding site for 14-3-3 proteins. Phosphorylated at Thr-1695 by GSK3A and GSK3B which facilitates RICTOR ubiquitination and subsequent degradation. Phosphorylated at Ser-1235 by GSK3B in response to endoplasmic stress, inhibiting mTORC2 signaling. Post-translationally, ubiquitinated by the SCF(FBXW7) complex, leading to its degradation by the proteasome. Deubiquitinated by USP9X; deubiquitination stabilizes RICTOR and enhances its binding to MTOR, thus promoting mTORC2 complex assembly. In terms of processing, acetylated by EP300/p300 in response to glucose, leading to activate the mTORC2 complex. Acetylation by BLOC1S1/GCN5L1 in response to hypotoxic stress protects RICTOR against ubiquitination and subsequent degradation by the proteasome.

It localises to the cell membrane. Its subcellular location is the endoplasmic reticulum membrane. The protein resides in the lysosome membrane. Functionally, component of the mechanistic target of rapamycin complex 2 (mTORC2), which transduces signals from growth factors to pathways involved in proliferation, cytoskeletal organization, lipogenesis and anabolic output. In response to growth factors, mTORC2 phosphorylates and activates AGC protein kinase family members, including AKT (AKT1, AKT2 and AKT3), PKC (PRKCA, PRKCB and PRKCE) and SGK1. In contrast to mTORC1, mTORC2 is nutrient-insensitive. Within the mTORC2 complex, RICTOR probably acts as a molecular adapter. RICTOR is responsible for the FKBP12-rapamycin-insensitivity of mTORC2. mTORC2 plays a critical role in AKT1 activation by mediating phosphorylation of different sites depending on the context, such as 'Thr-450', 'Ser-473', 'Ser-477' or 'Thr-479', facilitating the phosphorylation of the activation loop of AKT1 on 'Thr-308' by PDPK1/PDK1 which is a prerequisite for full activation. mTORC2 catalyzes the phosphorylation of SGK1 at 'Ser-422' and of PRKCA on 'Ser-657'. The mTORC2 complex also phosphorylates various proteins involved in insulin signaling, such as FBXW8 and IGF2BP1. mTORC2 acts upstream of Rho GTPases to regulate the actin cytoskeleton, probably by activating one or more Rho-type guanine nucleotide exchange factors. mTORC2 promotes the serum-induced formation of stress-fibers or F-actin. In Homo sapiens (Human), this protein is Rapamycin-insensitive companion of mTOR.